Here is an 817-residue protein sequence, read N- to C-terminus: Probable beta-glucosidase G (817 aa).

An N-terminal signal peptide occupies residues 1–20 (MANIAHLIVSGLLAATVAHG). 4 N-linked (GlcNAc...) asparagine glycosylation sites follow: Asn-40, Asn-58, Asn-229, and Asn-276. The active site involves Asp-304. 10 N-linked (GlcNAc...) asparagine glycosylation sites follow: Asn-343, Asn-350, Asn-402, Asn-507, Asn-563, Asn-584, Asn-623, Asn-662, Asn-679, and Asn-715.

Belongs to the glycosyl hydrolase 3 family.

It is found in the secreted. It catalyses the reaction Hydrolysis of terminal, non-reducing beta-D-glucosyl residues with release of beta-D-glucose.. Its pathway is glycan metabolism; cellulose degradation. Beta-glucosidases are one of a number of cellulolytic enzymes involved in the degradation of cellulosic biomass. Catalyzes the last step releasing glucose from the inhibitory cellobiose. The protein is Probable beta-glucosidase G (bglG) of Aspergillus terreus (strain NIH 2624 / FGSC A1156).